Here is a 173-residue protein sequence, read N- to C-terminus: Photosystem I assembly protein Ycf3 (173 aa).

3 TPR repeats span residues 35–68, 72–105, and 120–153; these read AYIYYRDGLAAQNNGDYSEALDYYNESLLLEENK, GETLKNMAIIYMSNGEEDRSIETYQKALEENPKQ, and GRFAEQNGDLDQRDMWFDKAAQVWSKAVRLYPGG.

It belongs to the Ycf3 family.

The protein resides in the cellular thylakoid membrane. In terms of biological role, essential for the assembly of the photosystem I (PSI) complex. May act as a chaperone-like factor to guide the assembly of the PSI subunits. In Prochlorococcus marinus subsp. pastoris (strain CCMP1986 / NIES-2087 / MED4), this protein is Photosystem I assembly protein Ycf3.